The sequence spans 294 residues: 1,4-dihydroxy-2-naphthoate octaprenyltransferase (294 aa).

Transmembrane regions (helical) follow at residues 35–55, 103–123, 140–160, 166–186, 220–240, and 272–292; these read SAVW…VIGV, AGLA…ATCI, GFGE…GTEY, VDWV…SVLV, LLVA…WCAV, and GLAM…AGSV.

This sequence belongs to the MenA family. Type 1 subfamily.

The protein localises to the cell membrane. It carries out the reaction an all-trans-polyprenyl diphosphate + 1,4-dihydroxy-2-naphthoate + H(+) = a 2-demethylmenaquinol + CO2 + diphosphate. It functions in the pathway quinol/quinone metabolism; menaquinone biosynthesis; menaquinol from 1,4-dihydroxy-2-naphthoate: step 1/2. Its function is as follows. Conversion of 1,4-dihydroxy-2-naphthoate (DHNA) to demethylmenaquinone (DMK). This is 1,4-dihydroxy-2-naphthoate octaprenyltransferase from Mycobacterium leprae (strain TN).